The primary structure comprises 314 residues: Putative integrase/recombinase y4rB (314 aa).

Positions 2 to 79 (STFRQAVQEY…YVRVFARYRA (78 aa)) constitute a Core-binding (CB) domain. The Tyr recombinase domain maps to 100–304 (ARPYLYSKED…SPELMKEAMR (205 aa)). Active-site residues include arginine 147, lysine 172, histidine 248, arginine 251, and histidine 282. Tyrosine 291 serves as the catalytic O-(3'-phospho-DNA)-tyrosine intermediate.

This sequence belongs to the 'phage' integrase family.

The sequence is that of Putative integrase/recombinase y4rB from Sinorhizobium fredii (strain NBRC 101917 / NGR234).